A 320-amino-acid polypeptide reads, in one-letter code: Probable NAD(P)H-dependent D-xylose reductase xyl1 (320 aa).

Y50 serves as the catalytic Proton donor. Residue H112 coordinates substrate. NAD(+) is bound by residues 167–168, 216–225, and 272–282; these read SN, SSFGPLSFLE, and KSNNPTRLSQN.

The protein belongs to the aldo/keto reductase family.

The catalysed reaction is xylitol + NAD(+) = D-xylose + NADH + H(+). The enzyme catalyses xylitol + NADP(+) = D-xylose + NADPH + H(+). The protein operates within carbohydrate metabolism; D-xylose degradation. Catalyzes the initial reaction in the xylose utilization pathway by reducing D-xylose into xylitol. Xylose is a major component of hemicelluloses such as xylan. Most fungi utilize D-xylose via three enzymatic reactions, xylose reductase (XR), xylitol dehydrogenase (XDH), and xylulokinase, to form xylulose 5-phosphate, which enters pentose phosphate pathway. The protein is Probable NAD(P)H-dependent D-xylose reductase xyl1 (xyl1) of Aspergillus terreus (strain NIH 2624 / FGSC A1156).